A 172-amino-acid polypeptide reads, in one-letter code: Large ribosomal subunit protein uL10 (172 aa).

Belongs to the universal ribosomal protein uL10 family. Part of the ribosomal stalk of the 50S ribosomal subunit. The N-terminus interacts with L11 and the large rRNA to form the base of the stalk. The C-terminus forms an elongated spine to which L12 dimers bind in a sequential fashion forming a multimeric L10(L12)X complex.

Forms part of the ribosomal stalk, playing a central role in the interaction of the ribosome with GTP-bound translation factors. In Chlorobium luteolum (strain DSM 273 / BCRC 81028 / 2530) (Pelodictyon luteolum), this protein is Large ribosomal subunit protein uL10.